A 369-amino-acid polypeptide reads, in one-letter code: Probable dual-specificity RNA methyltransferase RlmN (369 aa).

Catalysis depends on E106, which acts as the Proton acceptor. The Radical SAM core domain maps to 118-354 (EARRLTVCVS…VTVRRSRGQD (237 aa)). A disulfide bridge links C125 with C359. [4Fe-4S] cluster-binding residues include C132, C136, and C139. S-adenosyl-L-methionine contacts are provided by residues 183-184 (GE), S215, 238-240 (SLH), and N316. The S-methylcysteine intermediate role is filled by C359.

This sequence belongs to the radical SAM superfamily. RlmN family. [4Fe-4S] cluster serves as cofactor.

It is found in the cytoplasm. The enzyme catalyses adenosine(2503) in 23S rRNA + 2 reduced [2Fe-2S]-[ferredoxin] + 2 S-adenosyl-L-methionine = 2-methyladenosine(2503) in 23S rRNA + 5'-deoxyadenosine + L-methionine + 2 oxidized [2Fe-2S]-[ferredoxin] + S-adenosyl-L-homocysteine. The catalysed reaction is adenosine(37) in tRNA + 2 reduced [2Fe-2S]-[ferredoxin] + 2 S-adenosyl-L-methionine = 2-methyladenosine(37) in tRNA + 5'-deoxyadenosine + L-methionine + 2 oxidized [2Fe-2S]-[ferredoxin] + S-adenosyl-L-homocysteine. Functionally, specifically methylates position 2 of adenine 2503 in 23S rRNA and position 2 of adenine 37 in tRNAs. The chain is Probable dual-specificity RNA methyltransferase RlmN from Salinibacter ruber (strain DSM 13855 / M31).